Consider the following 1046-residue polypeptide: Translation initiation factor IF-2 (1046 aa).

The segment at 49-450 (ALQQGNGGKA…GVMLPRGNGQ (402 aa)) is disordered. Composition is skewed to low complexity over residues 57–80 (KAAP…ARPA) and 89–106 (PAAA…AAPA). The span at 107–128 (APGPRPGPKPAPRPAPAAPAPA) shows a compositional bias: pro residues. Low complexity predominate over residues 129-169 (APEFTAPPSAPAAPAAAASGPRPGARPGAPKPGGARPATPG). Residues 177–194 (RGERTDRGDRGDRGDRQG) are compositionally biased toward basic and acidic residues. Low complexity predominate over residues 195 to 214 (AARPGGQAPRPGARPAGPRP). 2 stretches are compositionally biased toward gly residues: residues 239-248 (PRPGGAGAPG) and 266-280 (GGPG…GPGG). Residues 302 to 318 (GNRPNPGMMPQRPAAGP) are compositionally biased toward low complexity. The segment covering 319-414 (RPGGGGPGGR…GTQGAFGRPG (96 aa)) has biased composition (gly residues). The segment covering 418–427 (RRGRKSKRQR) has biased composition (basic residues). The 173-residue stretch at 539-711 (ARPPVVTVMG…VVLTADASLD (173 aa)) folds into the tr-type G domain. The tract at residues 548–555 (GHVDHGKT) is G1. 548–555 (GHVDHGKT) contacts GTP. Residues 573 to 577 (GITQH) are G2. The tract at residues 598-601 (DTPG) is G3. GTP-binding positions include 598 to 602 (DTPGH) and 652 to 655 (NKID). A G4 region spans residues 652-655 (NKID). Residues 688-690 (SAK) form a G5 region.

It belongs to the TRAFAC class translation factor GTPase superfamily. Classic translation factor GTPase family. IF-2 subfamily.

The protein resides in the cytoplasm. In terms of biological role, one of the essential components for the initiation of protein synthesis. Protects formylmethionyl-tRNA from spontaneous hydrolysis and promotes its binding to the 30S ribosomal subunits. Also involved in the hydrolysis of GTP during the formation of the 70S ribosomal complex. The chain is Translation initiation factor IF-2 from Streptomyces avermitilis (strain ATCC 31267 / DSM 46492 / JCM 5070 / NBRC 14893 / NCIMB 12804 / NRRL 8165 / MA-4680).